A 118-amino-acid chain; its full sequence is Ribosome-binding factor A (118 aa).

The protein belongs to the RbfA family. Monomer. Binds 30S ribosomal subunits, but not 50S ribosomal subunits or 70S ribosomes.

It localises to the cytoplasm. Functionally, one of several proteins that assist in the late maturation steps of the functional core of the 30S ribosomal subunit. Associates with free 30S ribosomal subunits (but not with 30S subunits that are part of 70S ribosomes or polysomes). Required for efficient processing of 16S rRNA. May interact with the 5'-terminal helix region of 16S rRNA. The chain is Ribosome-binding factor A from Thermodesulfovibrio yellowstonii (strain ATCC 51303 / DSM 11347 / YP87).